A 358-amino-acid polypeptide reads, in one-letter code: Glucose 1-dehydrogenase (358 aa).

C38 is a Zn(2+) binding site. T40 is a substrate binding site. Residues H65, E66, C92, C95, C98, and C106 each coordinate Zn(2+). E113, E149, and N153 together coordinate substrate. Zn(2+) is bound at residue E149. Residues 187–190, 209–211, 268–270, 296–298, and K342 each bind NADP(+); these read SGPI, NRR, FGT, and SVN. N298 serves as a coordination point for substrate.

This sequence belongs to the zinc-containing alcohol dehydrogenase family. Glucose 1-dehydrogenase subfamily. Requires Zn(2+) as cofactor.

It catalyses the reaction D-glucose + NAD(+) = D-glucono-1,5-lactone + NADH + H(+). The catalysed reaction is D-glucose + NADP(+) = D-glucono-1,5-lactone + NADPH + H(+). In terms of biological role, catalyzes the NAD(P)(+)-dependent oxidation of D-glucose to D-gluconate via gluconolactone. Can utilize both NAD(+) and NADP(+) as electron acceptor. Is involved in the degradation of glucose through a non-phosphorylative variant of the Entner-Doudoroff pathway. The polypeptide is Glucose 1-dehydrogenase (Metallosphaera sedula (strain ATCC 51363 / DSM 5348 / JCM 9185 / NBRC 15509 / TH2)).